Reading from the N-terminus, the 142-residue chain is Secreted acidic protein 1B (142 aa).

Composition is skewed to acidic residues over residues 1–47 and 54–64; these read SDDE…DDNE and TNDDVDYGDGN. Positions 1 to 74 are disordered; sequence SDDESGDDEN…DEAREIGDHS (74 aa). Topologically, residues 1–123 are extracellular; that stretch reads SDDESGDDEN…YLRSGGSHFK (123 aa). The segment covering 65–74 has biased composition (basic and acidic residues); that stretch reads DEAREIGDHS. The chain crosses the membrane as a helical span at residues 124–141; the sequence is GQLLNITLGLGFCILFLL. Position 142 (leucine 142) is a topological domain, cytoplasmic.

As to expression, component of the acid-insoluble and acid-soluble organic matrix of the aragonitic skeleton (at protein level).

Its subcellular location is the membrane. The polypeptide is Secreted acidic protein 1B (Acropora millepora (Staghorn coral)).